The chain runs to 468 residues: 6-phospho-beta-galactosidase (468 aa).

D-galactose 6-phosphate contacts are provided by Gln19, His116, Asn159, Glu160, and Asn297. Glu160 acts as the Proton donor in catalysis. Glu375 acts as the Nucleophile in catalysis. D-galactose 6-phosphate-binding residues include Ser428, Trp429, Lys435, and Tyr437.

It belongs to the glycosyl hydrolase 1 family.

The enzyme catalyses a 6-phospho-beta-D-galactoside + H2O = D-galactose 6-phosphate + an alcohol. It functions in the pathway carbohydrate metabolism; lactose degradation; D-galactose 6-phosphate and beta-D-glucose from lactose 6-phosphate: step 1/1. The polypeptide is 6-phospho-beta-galactosidase (Streptococcus agalactiae serotype III (strain NEM316)).